The chain runs to 362 residues: MDVHLFDYVEPGNYSDINWPCNSSDCIVVDTVQCPAMPNKNVLLYTLSFIYIFIFVIGMIANSVVVWVNIQAKTTGYDTHCYILNLAIADLWVVITIPVWVVSLVQHNQWPMGELTCKITHLIFSINLFGSIFFLACMSVDRYLSITYFTSTSSYKKKMVRRVVCVLVWLLAFFVSLPDTYYLKTVTSASNNETYCRSFYPEHSIKEWLIGMELVSVILGFAVPFTIIAIFYFLLARAMSASGDQEKHSSRKIIFSYVVVFLVCWLPYHFVVLLDIFSILHYIPFTCQLENVLFTALHVTQCLSLVHCCVNPVLYSFINRNYRYELMKAFIFKYSAKTGLTKLIDASRVSETEYSALEQNTK.

The Extracellular segment spans residues 1-47; the sequence is MDVHLFDYVEPGNYSDINWPCNSSDCIVVDTVQCPAMPNKNVLLYTL. Asparagine 13 and asparagine 22 each carry an N-linked (GlcNAc...) asparagine glycan. The helical transmembrane segment at 48–68 threads the bilayer; the sequence is SFIYIFIFVIGMIANSVVVWV. At 69-81 the chain is on the cytoplasmic side; it reads NIQAKTTGYDTHC. A helical membrane pass occupies residues 82–102; the sequence is YILNLAIADLWVVITIPVWVV. The Extracellular portion of the chain corresponds to 103–118; that stretch reads SLVQHNQWPMGELTCK. A disulfide bridge connects residues cysteine 117 and cysteine 196. A helical membrane pass occupies residues 119 to 139; it reads ITHLIFSINLFGSIFFLACMS. Topologically, residues 140-162 are cytoplasmic; it reads VDRYLSITYFTSTSSYKKKMVRR. The chain crosses the membrane as a helical span at residues 163–183; sequence VVCVLVWLLAFFVSLPDTYYL. The Extracellular segment spans residues 184–213; the sequence is KTVTSASNNETYCRSFYPEHSIKEWLIGME. A helical membrane pass occupies residues 214 to 234; it reads LVSVILGFAVPFTIIAIFYFL. At 235-252 the chain is on the cytoplasmic side; that stretch reads LARAMSASGDQEKHSSRK. Residues 253-273 traverse the membrane as a helical segment; it reads IIFSYVVVFLVCWLPYHFVVL. The Extracellular segment spans residues 274 to 296; that stretch reads LDIFSILHYIPFTCQLENVLFTA. The chain crosses the membrane as a helical span at residues 297-319; the sequence is LHVTQCLSLVHCCVNPVLYSFIN. Topologically, residues 320-362 are cytoplasmic; the sequence is RNYRYELMKAFIFKYSAKTGLTKLIDASRVSETEYSALEQNTK. The C-terminal cytoplasmic tail stretch occupies residues 324–362; that stretch reads YELMKAFIFKYSAKTGLTKLIDASRVSETEYSALEQNTK. Phosphoserine is present on residues serine 347, serine 350, and serine 355.

Belongs to the G-protein coupled receptor 1 family. Atypical chemokine receptor subfamily. Homodimer. Can form heterodimers with CXCR4; heterodimerization may regulate CXCR4 signaling activity. Interacts with ARRB1 and ARRB2. In terms of processing, the Ser/Thr residues in the C-terminal cytoplasmic tail may be phosphorylated. Post-translationally, ubiquitinated at the Lys residues in its C-terminal cytoplasmic tail and is essential for correct trafficking from and to the cell membrane. Deubiquitinated by CXCL12-stimulation in a reversible manner. Expressed in vascular smooth muscle cells (at protein level). In brain, expressed in blood vessels, pyramidal cells in hippocampal subfield CA3, mature dentate gyrus granule cells, ventricle walls, olfactory bulb, accumbens shell, supraoptic, lateroanterior and ventromedial hypothalamic nuclei, medial region of thalamus, and motor nuclei, central gray and raphe magnus nucleus of brain stem. Detected in primary neurons, GABAergic neurons, astrocytes, cerebral cortex, ventral striatum and choroid plexus. Not detected in mesencephalon.

The protein resides in the cell membrane. Its subcellular location is the early endosome. The protein localises to the recycling endosome. Atypical chemokine receptor that controls chemokine levels and localization via high-affinity chemokine binding that is uncoupled from classic ligand-driven signal transduction cascades, resulting instead in chemokine sequestration, degradation, or transcytosis. Also known as interceptor (internalizing receptor) or chemokine-scavenging receptor or chemokine decoy receptor. Acts as a receptor for chemokines CXCL11 and CXCL12/SDF1. Chemokine binding does not activate G-protein-mediated signal transduction but instead induces beta-arrestin recruitment, leading to ligand internalization and activation of MAPK signaling pathway. Required for regulation of CXCR4 protein levels in migrating interneurons, thereby adapting their chemokine responsiveness. In glioma cells, transduces signals via MEK/ERK pathway, mediating resistance to apoptosis. Promotes cell growth and survival. Not involved in cell migration, adhesion or proliferation of normal hematopoietic progenitors but activated by CXCL11 in malignant hemapoietic cells, leading to phosphorylation of ERK1/2 (MAPK3/MAPK1) and enhanced cell adhesion and migration. Plays a regulatory role in CXCR4-mediated activation of cell surface integrins by CXCL12. Required for heart valve development. Functionally, atypical chemokine receptor that controls chemokine levels and localization via high-affinity chemokine binding that is uncoupled from classic ligand-driven signal transduction cascades, resulting instead in chemokine sequestration, degradation, or transcytosis. Also known as interceptor (internalizing receptor) or chemokine-scavenging receptor or chemokine decoy receptor. Acts as a receptor for chemokines CXCL11 and CXCL12/SDF1. Chemokine binding does not activate G-protein-mediated signal transduction but instead induces beta-arrestin recruitment, leading to ligand internalization and activation of MAPK signaling pathway. Required for regulation of CXCR4 protein levels in migrating interneurons, thereby adapting their chemokine responsiveness. In glioma cells, transduces signals via MEK/ERK pathway, mediating resistance to apoptosis. Promotes cell growth and survival. Not involved in cell migration, adhesion or proliferation of normal hematopoietic progenitors but activated by CXCL11 in malignant hemapoietic cells, leading to phosphorylation of ERK1/2 (MAPK3/MAPK1) and enhanced cell adhesion and migration. Plays a regulatory role in CXCR4-mediated activation of cell surface integrins by CXCL12. Required for heart valve development. Regulates axon guidance in the oculomotor system through the regulation of CXCL12 levels. This chain is Atypical chemokine receptor 3, found in Rattus norvegicus (Rat).